We begin with the raw amino-acid sequence, 154 residues long: SsrA-binding protein (154 aa).

The protein belongs to the SmpB family.

The protein localises to the cytoplasm. Functionally, required for rescue of stalled ribosomes mediated by trans-translation. Binds to transfer-messenger RNA (tmRNA), required for stable association of tmRNA with ribosomes. tmRNA and SmpB together mimic tRNA shape, replacing the anticodon stem-loop with SmpB. tmRNA is encoded by the ssrA gene; the 2 termini fold to resemble tRNA(Ala) and it encodes a 'tag peptide', a short internal open reading frame. During trans-translation Ala-aminoacylated tmRNA acts like a tRNA, entering the A-site of stalled ribosomes, displacing the stalled mRNA. The ribosome then switches to translate the ORF on the tmRNA; the nascent peptide is terminated with the 'tag peptide' encoded by the tmRNA and targeted for degradation. The ribosome is freed to recommence translation, which seems to be the essential function of trans-translation. In Enterococcus faecalis (strain ATCC 700802 / V583), this protein is SsrA-binding protein.